The sequence spans 96 residues: Co-chaperonin GroES (96 aa).

Belongs to the GroES chaperonin family. As to quaternary structure, heptamer of 7 subunits arranged in a ring. Interacts with the chaperonin GroEL.

The protein localises to the cytoplasm. Functionally, together with the chaperonin GroEL, plays an essential role in assisting protein folding. The GroEL-GroES system forms a nano-cage that allows encapsulation of the non-native substrate proteins and provides a physical environment optimized to promote and accelerate protein folding. GroES binds to the apical surface of the GroEL ring, thereby capping the opening of the GroEL channel. The sequence is that of Co-chaperonin GroES from Actinobacillus pleuropneumoniae serotype 7 (strain AP76).